Consider the following 416-residue polypeptide: Probable 26S proteasome regulatory subunit rpn-6.2 (416 aa).

The region spanning 217-386 is the PCI domain; sequence YKTSFSYFYE…DTVVVYPKAD (170 aa).

It belongs to the proteasome subunit S9 family. As to quaternary structure, component of the lid subcomplex of the 19S proteasome regulatory particle complex (also named PA700 complex). The 26S proteasome consists of a 20S proteasome core and two 19S regulatory subunits.

Component of the lid subcomplex of the 26S proteasome, a multiprotein complex involved in the ATP-dependent degradation of ubiquitinated proteins. In the complex, rpn-6.2 is required for proteasome assembly. The chain is Probable 26S proteasome regulatory subunit rpn-6.2 (rpn-6.2) from Caenorhabditis elegans.